The primary structure comprises 303 residues: Light-independent protochlorophyllide reductase iron-sulfur ATP-binding protein (303 aa).

The interval 1–24 (MSSVLERPAAPAILPSRQDGEGSV) is disordered. ATP contacts are provided by residues 47 to 52 (GIGKST) and K76. S51 serves as a coordination point for Mg(2+). [4Fe-4S] cluster contacts are provided by C132 and C166. ATP contacts are provided by residues 217–218 (NR) and 241–243 (PDL).

Belongs to the NifH/BchL/ChlL family. Homodimer. Protochlorophyllide reductase is composed of three subunits; BchL, BchN and BchB. [4Fe-4S] cluster serves as cofactor.

It carries out the reaction chlorophyllide a + oxidized 2[4Fe-4S]-[ferredoxin] + 2 ADP + 2 phosphate = protochlorophyllide a + reduced 2[4Fe-4S]-[ferredoxin] + 2 ATP + 2 H2O. Its pathway is porphyrin-containing compound metabolism; bacteriochlorophyll biosynthesis (light-independent). In terms of biological role, component of the dark-operative protochlorophyllide reductase (DPOR) that uses Mg-ATP and reduced ferredoxin to reduce ring D of protochlorophyllide (Pchlide) to form chlorophyllide a (Chlide). This reaction is light-independent. The L component serves as a unique electron donor to the NB-component of the complex, and binds Mg-ATP. This is Light-independent protochlorophyllide reductase iron-sulfur ATP-binding protein from Rhodospirillum centenum (strain ATCC 51521 / SW).